The sequence spans 274 residues: Transmembrane protein 106B (274 aa).

Positions 1–11 (MGKSLSHLPLH) are enriched in low complexity. Residues 1 to 20 (MGKSLSHLPLHSSKEDAYDG) are disordered. G2 carries N-myristoyl glycine lipidation. Residues 2–96 (GKSLSHLPLH…QRLRPRRTKL (95 aa)) lie on the Cytoplasmic side of the membrane. S33 bears the Phosphoserine mark. Residues 97–117 (YVMASVFVCLLLSGLAVFFLF) form a helical membrane-spanning segment. Over 118–274 (PRSIDVKYIG…EYLNVLQPQQ (157 aa)) the chain is Lumenal. N-linked (GlcNAc...) asparagine glycans are attached at residues N145, N151, N164, and N183. C214 and C253 are joined by a disulfide. N256 is a glycosylation site (N-linked (GlcNAc...) asparagine).

Belongs to the TMEM106 family. As to quaternary structure, can form homomers. Interacts (via N-terminus) with MAP6 (via C-terminus). Interacts (via C-terminus) with the vacuolar-type ATPase subunit ATP6AP1. Interacts (via N-terminus) with AP2M1 and CLTC. Interacts with TMEM106C. (Microbial infection) Interacts with SARS coronavirus-2/SARS-CoV-2 spike protein (via RBD domain). In terms of tissue distribution, expressed in the brain, including in the frontal cortex (at protein level). Expressed in lung epithelial cells.

The protein resides in the late endosome membrane. Its subcellular location is the lysosome membrane. The protein localises to the cell membrane. Functionally, in neurons, involved in the transport of late endosomes/lysosomes. May be involved in dendrite morphogenesis and maintenance by regulating lysosomal trafficking. May act as a molecular brake for retrograde transport of late endosomes/lysosomes, possibly via its interaction with MAP6. In motoneurons, may mediate the axonal transport of lysosomes and axonal sorting at the initial segment. It remains unclear whether TMEM106B affects the transport of moving lysosomes in the anterograde or retrograde direction in neurites and whether it is important in the sorting of lysosomes in axons or in dendrites. In neurons, may also play a role in the regulation of lysosomal size and responsiveness to stress. Required for proper lysosomal acidification. (Microbial infection) Plays a role in human coronavirus SARS-CoV-2 infection, but not in common cold coronaviruses HCoV-229E and HCoV-OC43 infections. Involved in ACE2-independent SARS-CoV-2 cell entry. Required for post-endocytic stage of virus entry, facilitates spike-mediated membrane fusion. Virus attachment and endocytosis can also be mediated by other cell surface receptors. This is Transmembrane protein 106B from Homo sapiens (Human).